Consider the following 441-residue polypeptide: MAGELYFSGVTGAYDWGSVLDNIMAVKSIPIQKLQQKKQLINQKLQILGEFSQKLSDLKNLIENFNLESALKTKKADVSDSDVISVSVSENAPEISFSVNVLNTASKEILVYDAGFNSLDETIGSDGSFTLRYYTSPTDYVEYTIDYSLIDTLKDIVNKINETQDYVKASIYYDGNKYKLMLAETSEENSTVETAPDLSTKAIHLLGTLPHQFGNNVLIQQAKNARIQIGSGDVIESAGNTFENVIEGVSISAKRAGTSEVSISQDFSKIREFLNNFVKSYNEVVSQVKSLTLGENAPFRGENTIMNVKYGLSDTLTPLMELGLIEYKEDGTISLSGNLESVINEKPDEFKLKMTQFLESAKAVAKVNYEAFEDFKEYLNDQAERIDENIRLLSQRLVQEEQILKRQFAQLEDFMNYANQIRERLKQFMVSISEMNGGNNK.

A coiled-coil region spans residues Lys376–Asn416.

This sequence belongs to the FliD family. As to quaternary structure, homopentamer.

Its subcellular location is the secreted. The protein resides in the bacterial flagellum. Required for the morphogenesis and for the elongation of the flagellar filament by facilitating polymerization of the flagellin monomers at the tip of growing filament. Forms a capping structure, which prevents flagellin subunits (transported through the central channel of the flagellum) from leaking out without polymerization at the distal end. This Aquifex aeolicus (strain VF5) protein is Flagellar hook-associated protein 2 (fliD).